Reading from the N-terminus, the 157-residue chain is Protein GrpE (157 aa).

Over residues 1–10 the composition is skewed to basic and acidic residues; that stretch reads MQEENQHPEQ. A disordered region spans residues 1–21; the sequence is MQEENQHPEQDDISEAQDAGA.

This sequence belongs to the GrpE family. As to quaternary structure, homodimer.

It is found in the cytoplasm. In terms of biological role, participates actively in the response to hyperosmotic and heat shock by preventing the aggregation of stress-denatured proteins, in association with DnaK and GrpE. It is the nucleotide exchange factor for DnaK and may function as a thermosensor. Unfolded proteins bind initially to DnaJ; upon interaction with the DnaJ-bound protein, DnaK hydrolyzes its bound ATP, resulting in the formation of a stable complex. GrpE releases ADP from DnaK; ATP binding to DnaK triggers the release of the substrate protein, thus completing the reaction cycle. Several rounds of ATP-dependent interactions between DnaJ, DnaK and GrpE are required for fully efficient folding. The polypeptide is Protein GrpE (Methylovorus sp. (strain SS1 / DSM 11726)).